We begin with the raw amino-acid sequence, 114 residues long: Nucleoid-associated protein MAE_23910 (114 aa).

Belongs to the YbaB/EbfC family. Homodimer.

It is found in the cytoplasm. The protein localises to the nucleoid. Its function is as follows. Binds to DNA and alters its conformation. May be involved in regulation of gene expression, nucleoid organization and DNA protection. The polypeptide is Nucleoid-associated protein MAE_23910 (Microcystis aeruginosa (strain NIES-843 / IAM M-2473)).